The primary structure comprises 340 residues: Selenide, water dikinase (340 aa).

Residue Cys-13 is part of the active site. ATP-binding positions include Lys-16 and 43–45 (ASD). Asp-46 provides a ligand contact to Mg(2+). Residues Asp-63, Asp-86, and 133 to 135 (GHS) each bind ATP. A Mg(2+)-binding site is contributed by Asp-86. Position 221 (Asp-221) interacts with Mg(2+).

It belongs to the selenophosphate synthase 1 family. Class I subfamily. In terms of assembly, homodimer. Mg(2+) serves as cofactor.

The enzyme catalyses hydrogenselenide + ATP + H2O = selenophosphate + AMP + phosphate + 2 H(+). In terms of biological role, synthesizes selenophosphate from selenide and ATP. This is Selenide, water dikinase from Desulfitobacterium hafniense (strain Y51).